Reading from the N-terminus, the 422-residue chain is MDSIRIRGGKPLSGKIRISGAKNAALPILCATLLSDGESLLRNVPALRDIETTSALLRFLGRNVETAPPLVKVGAGDNVRPEAPYELVKQMRASVMVLGPLLARFGRAKVSLPGGCQIGTRPVDQHLKGLEALGATIRLSRGYIVAECKRLRGAEVVFDLPTVTGTENLMMAAALAKGRTTLVNCAREPEVEELGRVLNKMGARVSGAGTDVIHIEGADELEPFDHAIISDRIEAGTYMVAAAAAGGDVLIENAPLEDLEAVAAKLRQAGVEVGREGDCVRVRREGRPLRAVDVTTAPHPGFPTDMQAQFMVLMCLAQGTSRIVETIFENRFMHVPELARMGAHIDVDGHTAHVHGGAPLSGATVMATDLRASASLVIAGLVATEGETEVLRVYHLDRGYEFMERKLAQLGADTARVEGRDG.

A phosphoenolpyruvate-binding site is contributed by 22–23 (KN). Arginine 92 is a binding site for UDP-N-acetyl-alpha-D-glucosamine. Residue cysteine 116 is the Proton donor of the active site. Cysteine 116 carries the 2-(S-cysteinyl)pyruvic acid O-phosphothioketal modification. Residues 121–125 (RPVDQ), aspartate 305, and isoleucine 327 contribute to the UDP-N-acetyl-alpha-D-glucosamine site.

The protein belongs to the EPSP synthase family. MurA subfamily.

The protein localises to the cytoplasm. The catalysed reaction is phosphoenolpyruvate + UDP-N-acetyl-alpha-D-glucosamine = UDP-N-acetyl-3-O-(1-carboxyvinyl)-alpha-D-glucosamine + phosphate. Its pathway is cell wall biogenesis; peptidoglycan biosynthesis. Cell wall formation. Adds enolpyruvyl to UDP-N-acetylglucosamine. The chain is UDP-N-acetylglucosamine 1-carboxyvinyltransferase from Sorangium cellulosum (strain So ce56) (Polyangium cellulosum (strain So ce56)).